A 379-amino-acid chain; its full sequence is ATP phosphoribosyltransferase regulatory subunit (379 aa).

Belongs to the class-II aminoacyl-tRNA synthetase family. HisZ subfamily. In terms of assembly, heteromultimer composed of HisG and HisZ subunits.

Its subcellular location is the cytoplasm. It functions in the pathway amino-acid biosynthesis; L-histidine biosynthesis; L-histidine from 5-phospho-alpha-D-ribose 1-diphosphate: step 1/9. In terms of biological role, required for the first step of histidine biosynthesis. May allow the feedback regulation of ATP phosphoribosyltransferase activity by histidine. The chain is ATP phosphoribosyltransferase regulatory subunit from Caldanaerobacter subterraneus subsp. tengcongensis (strain DSM 15242 / JCM 11007 / NBRC 100824 / MB4) (Thermoanaerobacter tengcongensis).